A 103-amino-acid polypeptide reads, in one-letter code: Large ribosomal subunit protein bL21 (103 aa).

It belongs to the bacterial ribosomal protein bL21 family. In terms of assembly, part of the 50S ribosomal subunit. Contacts protein L20.

In terms of biological role, this protein binds to 23S rRNA in the presence of protein L20. This is Large ribosomal subunit protein bL21 from Maridesulfovibrio salexigens (strain ATCC 14822 / DSM 2638 / NCIMB 8403 / VKM B-1763) (Desulfovibrio salexigens).